A 706-amino-acid chain; its full sequence is Alpha-hemolysin translocation ATP-binding protein HlyB (706 aa).

The 125-residue stretch at 1–125 (MMSKCSSHNS…KLYQGKVILV (125 aa)) folds into the Peptidase C39 domain. His-83 is a catalytic residue. 5 helical membrane passes run 153–173 (ILLE…ITPL), 191–211 (LNII…LTGA), 269–289 (ALTS…MWYY), 295–315 (LVIL…SPLL), and 388–408 (VMVI…ISIG). Residues 154–436 (LLEVLTVSAF…LAHLWQDFQQ (283 aa)) form the ABC transmembrane type-1 domain. The 236-residue stretch at 468 to 703 (IEFKNVRFRY…KDSLYAYLYQ (236 aa)) folds into the ABC transporter domain. An ATP-binding site is contributed by 502–509 (GRSGSGKS).

It belongs to the ABC transporter superfamily. Protein-1 exporter (TC 3.A.1.109) family. Homodimer.

The protein resides in the cell inner membrane. Part of the ABC transporter complex HlyBD involved in hemolysin export. Transmembrane domains (TMD) form a pore in the inner membrane and the ATP-binding domain (NBD) is responsible for energy generation. This is Alpha-hemolysin translocation ATP-binding protein HlyB (hlyB) from Escherichia coli O157:H7.